We begin with the raw amino-acid sequence, 305 residues long: tRNA pseudouridine synthase B (305 aa).

D39 functions as the Nucleophile in the catalytic mechanism.

It belongs to the pseudouridine synthase TruB family. Type 1 subfamily.

It catalyses the reaction uridine(55) in tRNA = pseudouridine(55) in tRNA. Responsible for synthesis of pseudouridine from uracil-55 in the psi GC loop of transfer RNAs. The polypeptide is tRNA pseudouridine synthase B (Staphylococcus haemolyticus (strain JCSC1435)).